The chain runs to 574 residues: DNA mismatch repair protein MutL (574 aa).

It belongs to the DNA mismatch repair MutL/HexB family.

In terms of biological role, this protein is involved in the repair of mismatches in DNA. It is required for dam-dependent methyl-directed DNA mismatch repair. May act as a 'molecular matchmaker', a protein that promotes the formation of a stable complex between two or more DNA-binding proteins in an ATP-dependent manner without itself being part of a final effector complex. This is DNA mismatch repair protein MutL from Coxiella burnetii (strain RSA 331 / Henzerling II).